Consider the following 253-residue polypeptide: Dihydroanticapsin 7-dehydrogenase (253 aa).

Position 9 to 31 (9 to 31) interacts with NAD(+); it reads LITGGASGIGYAAVQAFLGQQAN. S139 is a binding site for substrate. Y152 acts as the Proton acceptor in catalysis.

The protein belongs to the short-chain dehydrogenases/reductases (SDR) family.

It carries out the reaction L-dihydroanticapsin + NAD(+) = L-anticapsin + NADH + H(+). It participates in antibiotic biosynthesis; bacilysin biosynthesis. In terms of biological role, part of the bacABCDEFG operon responsible for the biosynthesis of bacilysin, an irreversible inactivator of the glutaminase domain of glucosamine synthetase. Catalyzes the dehydrogenation of the C7-hydroxyl group in the 4S-tetrahydrotyrosine (4S-H4Tyr) to yield anticapsin (epoxycyclohexanonyl-Ala). It is not able to oxidize the 4R-H4Tyr diastereomer and the dihydrobacilysin dipeptide (L-Ala-4S-H4Tyr dipeptide). This Bacillus subtilis (strain 168) protein is Dihydroanticapsin 7-dehydrogenase.